A 496-amino-acid polypeptide reads, in one-letter code: MLSLRPYEFWFVTGSQHLYGEEALKQVEEHSRIMVNEWNRDSVFPFPFVFKSVVTTPEEIRRVCLEANASEQCAGVVTWMHTFSPAKMWIGGLLELRKPLLHLHTQFNRDIPWDSIDMDFMNLNQSAHGDREYGFIGARMGVARKVVVGHWEDPEVRERLAKWMRTAVAFAESRNLKVARFGDNMREVAVTEGDKVGAQIQFGWSVNGYGIGDLVQYIRDVSEQKVNELLDEYEELYDIVPAGRQEGPVRESIREQARIELGLKAFLQDGNFTAFTTTFEDLHGMKQLPGLAVQRLMAEGYGFGGEGDWKTAALVRLMKVMADGKGTSFMEDYTYHFEPGNELILGAHMLEVCPTIAATRPRVEVHPLSIGGKEDPARLVFDGGEGAAVNASLIDLGHRFRLIVNEVDAVKPEHDMPKLPVARILWKPRPSLRDSAEAWILAGGAHHTCFSFAVTTEQLQDFAEMAGIECVVINEHTSVSSFKNELKWNEVFWRGR.

The Mn(2+) site is built by E306, E331, H348, and H447.

The protein belongs to the arabinose isomerase family. Mn(2+) serves as cofactor.

The enzyme catalyses beta-L-arabinopyranose = L-ribulose. It participates in carbohydrate degradation; L-arabinose degradation via L-ribulose; D-xylulose 5-phosphate from L-arabinose (bacterial route): step 1/3. Functionally, catalyzes the conversion of L-arabinose to L-ribulose. This Geobacillus kaustophilus (strain HTA426) protein is L-arabinose isomerase.